Reading from the N-terminus, the 530-residue chain is Alkyl hydroperoxide reductase subunit F (530 aa).

FAD is bound at residue 214 to 229 (DVLVVGGGPAGSAAAV). Cysteine 344 and cysteine 347 are disulfide-bonded. NAD(+) is bound at residue 356–370 (RVAVIGGGNSGVEAA). 477-487 (TDVPGVFAAGD) contributes to the FAD binding site.

This sequence belongs to the class-II pyridine nucleotide-disulfide oxidoreductase family. In terms of assembly, homodimer. FAD is required as a cofactor.

Its function is as follows. Serves to protect the cell against DNA damage by alkyl hydroperoxides. It can use either NADH or NADPH as electron donor for direct reduction of redox dyes or of alkyl hydroperoxides when combined with the AhpC protein. The chain is Alkyl hydroperoxide reductase subunit F (ahpF) from Xanthomonas campestris pv. phaseoli.